A 262-amino-acid polypeptide reads, in one-letter code: Small ribosomal subunit protein eS1 (262 aa).

The protein belongs to the eukaryotic ribosomal protein eS1 family. As to quaternary structure, component of the small ribosomal subunit. Mature ribosomes consist of a small (40S) and a large (60S) subunit. The 40S subunit contains about 33 different proteins and 1 molecule of RNA (18S). The 60S subunit contains about 49 different proteins and 3 molecules of RNA (25S, 5.8S and 5S).

Its subcellular location is the cytoplasm. The polypeptide is Small ribosomal subunit protein eS1 (Plasmodium knowlesi (strain H)).